The primary structure comprises 273 residues: Glutamate racemase (273 aa).

Substrate-binding positions include 9-10 (DS) and 41-42 (YG). Catalysis depends on cysteine 73, which acts as the Proton donor/acceptor. 74-75 (NT) is a substrate binding site. The Proton donor/acceptor role is filled by cysteine 183. Substrate is bound at residue 184 to 185 (TH).

The protein belongs to the aspartate/glutamate racemases family.

The enzyme catalyses L-glutamate = D-glutamate. It functions in the pathway cell wall biogenesis; peptidoglycan biosynthesis. Its function is as follows. Provides the (R)-glutamate required for cell wall biosynthesis. The polypeptide is Glutamate racemase (Shewanella sp. (strain ANA-3)).